We begin with the raw amino-acid sequence, 783 residues long: Na(+)/H(+) exchanger protein 7 (783 aa).

A helical membrane pass occupies residues Met-1–Gly-18. Residues Leu-19–Leu-108 are Extracellular-facing. A helical transmembrane segment spans residues Val-109–Val-129. The Cytoplasmic portion of the chain corresponds to Thr-130–Lys-132. A helical membrane pass occupies residues Ile-133–Gly-153. Residues Asp-154–Ser-159 lie on the Extracellular side of the membrane. A helical transmembrane segment spans residues Ile-160 to Leu-180. Residues Glu-181–Thr-206 are Cytoplasmic-facing. A helical membrane pass occupies residues Ile-207–Gly-227. Over Lys-228–Asp-235 the chain is Extracellular. Residues Ile-236–Gln-256 traverse the membrane as a helical segment. The Cytoplasmic portion of the chain corresponds to Glu-257–Lys-262. A helical transmembrane segment spans residues Met-263–Tyr-283. Residues Asn-284 to His-299 are Extracellular-facing. The helical transmembrane segment at Gly-300–Ile-320 threads the bilayer. At Cys-321–Ala-350 the chain is on the cytoplasmic side. A helical membrane pass occupies residues Tyr-351 to Phe-371. Residues Gln-372 to Tyr-390 lie on the Extracellular side of the membrane. Asn-379 is a glycosylation site (N-linked (GlcNAc...) asparagine). An intramembrane region (helical) is located at residues Ile-391–Leu-411. Over Val-412–Pro-424 the chain is Extracellular. A helical membrane pass occupies residues Val-425–Leu-445. Residues Thr-446–Gln-464 lie on the Cytoplasmic side of the membrane. A helical membrane pass occupies residues Phe-465–Ser-485. At Ala-486–Asn-492 the chain is on the extracellular side. The helical transmembrane segment at Thr-493–Ile-513 threads the bilayer. At Lys-514–Phe-783 the chain is on the cytoplasmic side. Residues Asp-649–Ala-702 are a coiled coil. Residues Arg-745–Phe-783 form a disordered region.

This sequence belongs to the monovalent cation:proton antiporter 1 (CPA1) transporter (TC 2.A.36) family. As to quaternary structure, interacts (via C-terminus) with cmd-1. As to expression, detected in the posterior cells of the intestine.

The protein resides in the basolateral cell membrane. In terms of biological role, na+/H+ exchanger which mediates the transient acidification of the coelomic space and plays a role in contraction of posterior body muscles during defecation. Probably by regulating the defecation motor program, required for fatty acid uptake by intestinal cells. In Caenorhabditis elegans, this protein is Na(+)/H(+) exchanger protein 7.